Here is a 43-residue protein sequence, read N- to C-terminus: Potassium channel toxin gamma-KTx 4.4 (43 aa).

4 disulfide bridges follow: C5-C23, C11-C34, C20-C39, and C24-C41.

This sequence belongs to the ergtoxin family. Gamma-KTx 4 subfamily. In terms of tissue distribution, expressed by the venom gland.

The protein localises to the secreted. In terms of biological role, reversibly blocks Kv11/ERG potassium channels. This chain is Potassium channel toxin gamma-KTx 4.4, found in Centruroides exilicauda (Bark scorpion).